The chain runs to 88 residues: MSRSLRKGPFVDHHLIKKVRAMNLLEKKSPIKTWSRRSMITPEMIGHTFEVHNGKKFLTVFVSETMVGHKLGEFSPTRIFKSHPVKKG.

It belongs to the universal ribosomal protein uS19 family.

Protein S19 forms a complex with S13 that binds strongly to the 16S ribosomal RNA. This Chlamydia caviae (strain ATCC VR-813 / DSM 19441 / 03DC25 / GPIC) (Chlamydophila caviae) protein is Small ribosomal subunit protein uS19.